The chain runs to 122 residues: Large ribosomal subunit protein bL12 (122 aa).

It belongs to the bacterial ribosomal protein bL12 family. Homodimer. Part of the ribosomal stalk of the 50S ribosomal subunit. Forms a multimeric L10(L12)X complex, where L10 forms an elongated spine to which 2 to 4 L12 dimers bind in a sequential fashion. Binds GTP-bound translation factors.

Functionally, forms part of the ribosomal stalk which helps the ribosome interact with GTP-bound translation factors. Is thus essential for accurate translation. The sequence is that of Large ribosomal subunit protein bL12 from Enterococcus faecalis (strain ATCC 700802 / V583).